A 101-amino-acid chain; its full sequence is Small ribosomal subunit protein uS10 (101 aa).

Belongs to the universal ribosomal protein uS10 family. In terms of assembly, part of the 30S ribosomal subunit.

Involved in the binding of tRNA to the ribosomes. The polypeptide is Small ribosomal subunit protein uS10 (Brachyspira pilosicoli (Serpulina pilosicoli)).